The primary structure comprises 207 residues: Ion-translocating oxidoreductase complex subunit B (207 aa).

The segment at 1–29 (MLDLSIIAYLLIAICLIALIFGALLGYFS) is hydrophobic. A 4Fe-4S domain is found at 35 to 93 (EADPIVDQIDAILPQSQCGQCGYPGCKPYAEAIANGDQITKCVPGGQPLVVKIAELMGV). [4Fe-4S] cluster contacts are provided by C52, C55, C60, C76, C116, C119, C122, C126, C146, C149, C152, and C156. 4Fe-4S ferredoxin-type domains are found at residues 107-136 (KVAL…GTNK) and 137-166 (AMHT…MIKV).

Belongs to the 4Fe4S bacterial-type ferredoxin family. RnfB subfamily. The complex is composed of six subunits: RnfA, RnfB, RnfC, RnfD, RnfE and RnfG. [4Fe-4S] cluster is required as a cofactor.

The protein localises to the cell inner membrane. Its function is as follows. Part of a membrane-bound complex that couples electron transfer with translocation of ions across the membrane. The sequence is that of Ion-translocating oxidoreductase complex subunit B from Haemophilus ducreyi (strain 35000HP / ATCC 700724).